A 493-amino-acid chain; its full sequence is Polyamine aminopropyltransferase 2 (493 aa).

The next 7 helical transmembrane spans lie at 9-29, 32-52, 68-88, 101-121, 137-157, 161-181, and 188-208; these read LCIF…ATLA, LLGN…LSMG, LAFV…VPIA, VIYG…PLAV, VLEK…YLFL, GLPL…FLLV, and KFLK…AVGH. A spermidine synthase region spans residues 187–448; the sequence is KKFLKFLAIF…PLNFENFELK (262 aa). The PABS domain maps to 202–437; it reads ATYAVGHKRI…GEWGMVIGSK (236 aa). Residue Gln-233 coordinates S-methyl-5'-thioadenosine. 2 residues coordinate spermidine: His-263 and Asp-287. S-methyl-5'-thioadenosine contacts are provided by residues Asp-306 and 340–341; that span reads DA. Asp-358 acts as the Proton acceptor in catalysis.

The protein belongs to the spermidine/spermine synthase family. Homodimer or homotetramer.

It is found in the cell membrane. It catalyses the reaction S-adenosyl 3-(methylsulfanyl)propylamine + putrescine = S-methyl-5'-thioadenosine + spermidine + H(+). It participates in amine and polyamine biosynthesis; spermidine biosynthesis; spermidine from putrescine: step 1/1. In terms of biological role, catalyzes the irreversible transfer of a propylamine group from the amino donor S-adenosylmethioninamine (decarboxy-AdoMet) to putrescine (1,4-diaminobutane) to yield spermidine. The protein is Polyamine aminopropyltransferase 2 of Aquifex aeolicus (strain VF5).